A 248-amino-acid chain; its full sequence is ATP synthase subunit a (248 aa).

6 helical membrane passes run 25 to 45 (IAFTNSSAYMFAAVAIIAVMM), 83 to 103 (FFPLVFSLFMFIAVSNLVGII), 113 to 133 (LIVTVTLAMLVFVTVLVYGLA), 142 to 162 (LFVPSGVPIYILPLVVFIEVI), 192 to 212 (FIAMLGALGVVGWVGAVLPLG), and 215 to 235 (IALTALELLVAFLQAYVFAIL).

It belongs to the ATPase A chain family. F-type ATPases have 2 components, CF(1) - the catalytic core - and CF(0) - the membrane proton channel. CF(1) has five subunits: alpha(3), beta(3), gamma(1), delta(1), epsilon(1). CF(0) has four main subunits: a, b, b' and c.

The protein resides in the cell inner membrane. Its function is as follows. Key component of the proton channel; it plays a direct role in the translocation of protons across the membrane. In Rhodopseudomonas palustris (strain HaA2), this protein is ATP synthase subunit a.